We begin with the raw amino-acid sequence, 131 residues long: MKKIEKTLDEWRSMLDPEQYQVCRLKGTERPFSGKYNSERRDGIYHCICCNLPLFDAQTKFDSGCGWPSFYAPIEDSAMIEIRDTSHGMIRTEVTCARCDAHLGHVFPDGPAPTGLRYCINSVCIDLRPRD.

Residues 8–130 (LDEWRSMLDP…NSVCIDLRPR (123 aa)) enclose the MsrB domain. Residues cysteine 47, cysteine 50, cysteine 96, and cysteine 99 each contribute to the Zn(2+) site. Cysteine 119 (nucleophile) is an active-site residue.

This sequence belongs to the MsrB Met sulfoxide reductase family. The cofactor is Zn(2+).

The catalysed reaction is L-methionyl-[protein] + [thioredoxin]-disulfide + H2O = L-methionyl-(R)-S-oxide-[protein] + [thioredoxin]-dithiol. The sequence is that of Peptide methionine sulfoxide reductase MsrB from Pseudomonas putida (strain GB-1).